A 145-amino-acid chain; its full sequence is Basic phospholipase A2 cPt09 (145 aa).

The N-terminal stretch at 1-21 (MYPAHLLVLLAVCVSLLGAST) is a signal peptide. Residues 22 to 27 (IPPLPL) constitute a propeptide that is removed on maturation. 7 disulfides stabilise this stretch: C38–C98, C54–C144, C56–C72, C71–C125, C78–C118, C87–C111, and C105–C116. Positions 55, 57, and 59 each coordinate Ca(2+). Residue H75 is part of the active site. D76 provides a ligand contact to Ca(2+). The active site involves D119.

It belongs to the phospholipase A2 family. Group I subfamily. D49 sub-subfamily. Ca(2+) serves as cofactor. As to expression, expressed by the venom gland.

It is found in the secreted. It catalyses the reaction a 1,2-diacyl-sn-glycero-3-phosphocholine + H2O = a 1-acyl-sn-glycero-3-phosphocholine + a fatty acid + H(+). PLA2 catalyzes the calcium-dependent hydrolysis of the 2-acyl groups in 3-sn-phosphoglycerides. This Laticauda semifasciata (Black-banded sea krait) protein is Basic phospholipase A2 cPt09.